A 68-amino-acid chain; its full sequence is Frenatin-3 (68 aa).

A signal peptide spans 1 to 22; the sequence is MHFLKKSIFLVLFLGLVSLSIC. A propeptide spanning residues 23-46 is cleaved from the precursor; sequence EKEKREDQNEEEVDENEEESEEKR. A disordered region spans residues 26–47; it reads KREDQNEEEVDENEEESEEKRG. Residues 30-42 are compositionally biased toward acidic residues; it reads QNEEEVDENEEES.

This sequence belongs to the frog skin active peptide (FSAP) family. Frenatin subfamily. Expressed by the granular skin glands.

It localises to the secreted. Antimicrobial peptide with activity against both Gram-positive and Gram-negative bacteria. Antibacterial activities have been tested against Bacillus cereus (MIC=12.5 ug/ml), Escherichia coli (MIC=50 ug/ml), Leuconostoc mesenteroides (MIC=25 ug/ml), Micrococcus luteus (MIC=1.5 ug/ml), Pastewella haemolytica (MIC=0.8 ug/ml), Staphylococcus aureus (MIC&lt;l00 ug/ml), Streptococcus faecalis (MIC&lt;150 ug/ml) and Streptococcus uberis (MIC=50 ug/ml). Strongly inhibits the formation of NO by neuronal nitric oxide synthase (nNOS) at micromolar concentrations. Acts by a non-competitive mechanism, probably by binding to calcium/calmodulin and as a consequence blocking calmodulin attachment to nNOS. This is Frenatin-3 from Nyctimystes infrafrenatus (White-lipped tree frog).